The chain runs to 507 residues: Cuticlin-4 (507 aa).

The first 19 residues, 1-19 (MFHFTRILAAFLLPTLCFC), serve as a signal peptide directing secretion. Topologically, residues 20 to 471 (GYSTAPSSTV…KTCFSTSRMY (452 aa)) are extracellular. The ZP domain maps to 42–280 (VCETASISLL…YGCSNTQPQC (239 aa)). The disordered stretch occupies residues 292-350 (KTTETAEPYPYDSHESGYPTRPANYPVASSRYPIPTTQAPASYPSSPAPPPPGADIDNG). N-linked (GlcNAc...) asparagine glycosylation is found at Asn-374 and Asn-408. The chain crosses the membrane as a helical span at residues 472-492 (FTLILLCLLFATTVVVFIVIV). Residues 493–507 (QKQRQILAQTAFFKP) lie on the Cytoplasmic side of the membrane.

It localises to the cell membrane. Its function is as follows. Plays a role in alae formation and subsequent cuticle attachment in adults. The polypeptide is Cuticlin-4 (Caenorhabditis elegans).